A 284-amino-acid polypeptide reads, in one-letter code: MTSFQFTKMHGLGNNYIYVNQMKEQLPEEKLSEIAIQVSSIYTGIGSDGMILICPSDVAPVKMRIFNNDGSEGKNCGNGLRCVAKYVYEHQIVTDTTFQIETLSGLVEATVHVQDDHVHLVTVDMGKPRFEKEAMPMLGEPASTTINEPLDFGTTTLNGTAVSMGNPHIVFYLEDIEKAPLDTLGPIIEKHDMFPEGVNVEFVEVVSETELHFRVWERGSGITQACGTGACAAAVSTIVNGQAKKETDMTVHLAGGDLIIRWKDNEHVLMTGPAETICDGTFYL.

2 residues coordinate substrate: asparagine 14 and asparagine 67. The Proton donor role is filled by cysteine 76. Residues 77-78 (GN), asparagine 166, asparagine 199, and 217-218 (ER) each bind substrate. Cysteine 226 (proton acceptor) is an active-site residue. 227 to 228 (GT) is a substrate binding site.

This sequence belongs to the diaminopimelate epimerase family. In terms of assembly, homodimer.

The protein resides in the cytoplasm. The enzyme catalyses (2S,6S)-2,6-diaminopimelate = meso-2,6-diaminopimelate. The protein operates within amino-acid biosynthesis; L-lysine biosynthesis via DAP pathway; DL-2,6-diaminopimelate from LL-2,6-diaminopimelate: step 1/1. Its function is as follows. Catalyzes the stereoinversion of LL-2,6-diaminopimelate (L,L-DAP) to meso-diaminopimelate (meso-DAP), a precursor of L-lysine and an essential component of the bacterial peptidoglycan. This is Diaminopimelate epimerase from Bacillus pumilus (strain SAFR-032).